Here is a 348-residue protein sequence, read N- to C-terminus: N-formyl peptide receptor 2 (348 aa).

N-linked (GlcNAc...) asparagine glycosylation is present at N1. The Extracellular segment spans residues 1 to 24 (NFSTPLSEYEEVSYESAGYTVLQI). A helical membrane pass occupies residues 25 to 47 (LPLVVLGVTFVLGVLGNGLVIWV). At 48–58 (AGFRMTRTVTT) the chain is on the cytoplasmic side. A helical transmembrane segment spans residues 59–80 (ICYLNLALADFSFTATLPFLIV). Topologically, residues 81 to 97 (SMAMGEKWPFGWFLCKL) are extracellular. An intrachain disulfide couples C95 to C173. Residues 98–118 (IHIVVDINLFGSVFLIGFIAL) form a helical membrane-spanning segment. Residues 119–137 (DRCICVLHPVWAQNHRTVS) lie on the Cytoplasmic side of the membrane. The chain crosses the membrane as a helical span at residues 138–159 (LAMKVIVGPWILALVLTLPVFL). Over 160 to 202 (FLTTVTIPNGDTYCTFNFASWGGTPEKRLKVAITMLTARGIIR) the chain is Extracellular. The helical transmembrane segment at 203-223 (FVIGFSMPMSIVATCYGLIAA) threads the bilayer. Residues 224–239 (KIHKKGMIKSSRPLRV) lie on the Cytoplasmic side of the membrane. A helical membrane pass occupies residues 240-263 (LTAVVASFFICWFPFQLVALLSTV). The Extracellular segment spans residues 264–283 (WLKEILVDGKYKIINILVNP). Residues 284–303 (TSSLAFFNSCLNPMLYVFVG) traverse the membrane as a helical segment. At 304-348 (QDFRERLIHSLPTSLERALSEDSAPTNDTAASCASPPAETELQAM) the chain is on the cytoplasmic side. The tract at residues 322–348 (LSEDSAPTNDTAASCASPPAETELQAM) is disordered. The segment covering 326 to 335 (SAPTNDTAAS) has biased composition (polar residues).

Belongs to the G-protein coupled receptor 1 family. In terms of assembly, interacts with APP; the interaction takes place at the cell surface and the complex is then rapidly internalized.

It localises to the cell membrane. Its function is as follows. Low affinity receptor for N-formyl-methionyl peptides, which are powerful neutrophil chemotactic factors. Binding of FMLP to the receptor causes activation of neutrophils. This response is mediated via a G-protein that activates a phosphatidylinositol-calcium second messenger system. Receptor for the chemokine-like protein FAM19A5, mediating FAM19A5-stimulated macrophage chemotaxis and the inhibitory effect on TNFSF11/RANKL-induced osteoclast differentiation. This Macaca mulatta (Rhesus macaque) protein is N-formyl peptide receptor 2 (FPR2).